Here is a 150-residue protein sequence, read N- to C-terminus: FAD synthase (150 aa).

Residues 8–9 (AF), 13–16 (HPGH), Asp95, and His122 each bind ATP.

Belongs to the archaeal FAD synthase family. In terms of assembly, homodimer. A divalent metal cation serves as cofactor.

The catalysed reaction is FMN + ATP + H(+) = FAD + diphosphate. It functions in the pathway cofactor biosynthesis; FAD biosynthesis; FAD from FMN: step 1/1. Functionally, catalyzes the transfer of the AMP portion of ATP to flavin mononucleotide (FMN) to produce flavin adenine dinucleotide (FAD) coenzyme. The protein is FAD synthase of Methanobrevibacter ruminantium (strain ATCC 35063 / DSM 1093 / JCM 13430 / OCM 146 / M1) (Methanobacterium ruminantium).